The sequence spans 146 residues: Large ribosomal subunit protein uL11 (146 aa).

This sequence belongs to the universal ribosomal protein uL11 family. In terms of assembly, part of the ribosomal stalk of the 50S ribosomal subunit. Interacts with L10 and the large rRNA to form the base of the stalk. L10 forms an elongated spine to which L12 dimers bind in a sequential fashion forming a multimeric L10(L12)X complex. In terms of processing, one or more lysine residues are methylated.

Forms part of the ribosomal stalk which helps the ribosome interact with GTP-bound translation factors. The chain is Large ribosomal subunit protein uL11 from Corynebacterium kroppenstedtii (strain DSM 44385 / JCM 11950 / CIP 105744 / CCUG 35717).